The sequence spans 548 residues: Chaperonin GroEL (548 aa).

Residues 30–33 (TLGP), Lys51, 87–91 (DGTTT), Gly415, 479–481 (NAA), and Asp495 contribute to the ATP site.

Belongs to the chaperonin (HSP60) family. As to quaternary structure, forms a cylinder of 14 subunits composed of two heptameric rings stacked back-to-back. Interacts with the co-chaperonin GroES.

It is found in the cytoplasm. The enzyme catalyses ATP + H2O + a folded polypeptide = ADP + phosphate + an unfolded polypeptide.. In terms of biological role, together with its co-chaperonin GroES, plays an essential role in assisting protein folding. The GroEL-GroES system forms a nano-cage that allows encapsulation of the non-native substrate proteins and provides a physical environment optimized to promote and accelerate protein folding. The chain is Chaperonin GroEL from Klebsiella pneumoniae subsp. pneumoniae (strain ATCC 700721 / MGH 78578).